The chain runs to 189 residues: ATP synthase subunit b (189 aa).

Residues 35–54 (LLAQMFNFLVLLILLRAVAY) form a helical membrane-spanning segment.

It belongs to the ATPase B chain family. As to quaternary structure, F-type ATPases have 2 components, F(1) - the catalytic core - and F(0) - the membrane proton channel. F(1) has five subunits: alpha(3), beta(3), gamma(1), delta(1), epsilon(1). F(0) has three main subunits: a(1), b(2) and c(10-14). The alpha and beta chains form an alternating ring which encloses part of the gamma chain. F(1) is attached to F(0) by a central stalk formed by the gamma and epsilon chains, while a peripheral stalk is formed by the delta and b chains.

It is found in the cell membrane. Functionally, f(1)F(0) ATP synthase produces ATP from ADP in the presence of a proton or sodium gradient. F-type ATPases consist of two structural domains, F(1) containing the extramembraneous catalytic core and F(0) containing the membrane proton channel, linked together by a central stalk and a peripheral stalk. During catalysis, ATP synthesis in the catalytic domain of F(1) is coupled via a rotary mechanism of the central stalk subunits to proton translocation. Component of the F(0) channel, it forms part of the peripheral stalk, linking F(1) to F(0). The polypeptide is ATP synthase subunit b (Desulforamulus reducens (strain ATCC BAA-1160 / DSM 100696 / MI-1) (Desulfotomaculum reducens)).